Reading from the N-terminus, the 763-residue chain is Hormone-sensitive lipase (763 aa).

The Involved in the stabilization of the negatively charged intermediate by the formation of the oxyanion hole motif lies at 350–352 (HGG). The active site involves S424. S552 bears the Phosphoserine mark. S554 carries the phosphoserine; by AMPK modification. A phosphoserine mark is found at S595, S627, and S649. The span at 616–627 (AREEAEAKEGLS) shows a compositional bias: basic and acidic residues. Positions 616–652 (AREEAEAKEGLSAKDGSSRVSNAFPEGFHPRRTSQGA) are disordered. Catalysis depends on residues D692 and H722.

Belongs to the 'GDXG' lipolytic enzyme family. Monomer and homodimer. Interacts with CAVIN1 in the adipocyte cytoplasm. Interacts with PLIN5. Post-translationally, phosphorylation by AMPK reduces its translocation towards the lipid droplets.

The protein resides in the cell membrane. It localises to the membrane. The protein localises to the caveola. It is found in the cytoplasm. Its subcellular location is the cytosol. The protein resides in the lipid droplet. The enzyme catalyses a diacylglycerol + H2O = a monoacylglycerol + a fatty acid + H(+). It catalyses the reaction a triacylglycerol + H2O = a diacylglycerol + a fatty acid + H(+). It carries out the reaction a monoacylglycerol + H2O = glycerol + a fatty acid + H(+). The catalysed reaction is Hydrolyzes glycerol monoesters of long-chain fatty acids.. The enzyme catalyses 1,2-di-(9Z-octadecenoyl)-glycerol + (9Z)-octadecenoate + H(+) = 1,2,3-tri-(9Z-octadecenoyl)-glycerol + H2O. It catalyses the reaction 2,3-di-(9Z)-octadecenoyl-sn-glycerol + H2O = 2-(9Z-octadecenoyl)-glycerol + (9Z)-octadecenoate + H(+). It carries out the reaction cholesteryl (9Z-octadecenoate) + H2O = cholesterol + (9Z)-octadecenoate + H(+). The catalysed reaction is 1,2,3-tri-(9Z-octadecenoyl)-glycerol + H2O = di-(9Z)-octadecenoylglycerol + (9Z)-octadecenoate + H(+). The enzyme catalyses all-trans-retinyl hexadecanoate + H2O = all-trans-retinol + hexadecanoate + H(+). It catalyses the reaction 1,2-di-(9Z-octadecenoyl)-glycerol + H2O = (9Z-octadecenoyl)-glycerol + (9Z)-octadecenoate + H(+). It carries out the reaction 2-(5Z,8Z,11Z,14Z-eicosatetraenoyl)-glycerol + H2O = glycerol + (5Z,8Z,11Z,14Z)-eicosatetraenoate + H(+). The catalysed reaction is 1-(9Z-octadecenoyl)-glycerol + H2O = glycerol + (9Z)-octadecenoate + H(+). The enzyme catalyses 2-(9Z-octadecenoyl)-glycerol + H2O = glycerol + (9Z)-octadecenoate + H(+). It catalyses the reaction 1-O-hexadecyl-2-acetyl-sn-glycerol + H2O = 1-O-hexadecyl-sn-glycerol + acetate + H(+). It carries out the reaction 1,2-di-(9Z-octadecenoyl)-sn-glycerol + H2O = (9Z-octadecenoyl)-glycerol + (9Z)-octadecenoate + H(+). The catalysed reaction is 1,3-di-(9Z-octadecenoyl)-glycerol + H2O = 1-(9Z-octadecenoyl)-glycerol + (9Z)-octadecenoate + H(+). The enzyme catalyses 1,2-di-(9Z-octadecenoyl)-glycerol + H2O = 2-(9Z-octadecenoyl)-glycerol + (9Z)-octadecenoate + H(+). The protein operates within glycerolipid metabolism; triacylglycerol degradation. In terms of biological role, lipase with broad substrate specificity, catalyzing the hydrolysis of triacylglycerols (TAGs), diacylglycerols (DAGs), monoacylglycerols (MAGs), cholesteryl esters and retinyl esters. Shows a preferential hydrolysis of DAGs over TAGs and MAGs. Preferentially hydrolyzes fatty acid (FA) esters at the sn-3 position of the glycerol backbone in DAGs and FA esters at the sn-1 and sn-2 positions of the glycerol backbone in TAGs. Catalyzes the hydrolysis of 2-arachidonoylglycerol, an endocannabinoid and of 2-acetyl monoalkylglycerol ether, the penultimate precursor of the pathway for de novo synthesis of platelet-activating factor. In adipose tissue and heart, it primarily hydrolyzes stored triglycerides to free fatty acids, while in steroidogenic tissues, it principally converts cholesteryl esters to free cholesterol for steroid hormone production. The chain is Hormone-sensitive lipase (LIPE) from Ictidomys tridecemlineatus (Thirteen-lined ground squirrel).